The sequence spans 29 residues: Beta-hexatoxin-Mr1a (29 aa).

3 disulfide bridges follow: Cys-2–Cys-16, Cys-9–Cys-21, and Cys-15–Cys-26.

Belongs to the neurotoxin 15 family. 01 (magi-5) subfamily. As to expression, expressed by the venom gland.

It is found in the secreted. In terms of biological role, insect and vertebrate active toxin. Binds at site 4 of mammalian voltage-gated sodium channels and shifts the activation voltage of the mammalian rNav1.2a (SCN2A) channel to more hyperpolarized voltages, whereas the insect channel, DmNav1 (para), is not affected. Causes temporary paralysis when injected into lepidopteran larvae at 8.6 nmol/g. A low intracranial injection dose into mice causes lacrimation, closure of the eyes and sweating. A high injection dose causes extensive lacrimation and death. In Macrothele raveni (Funnel-web spider), this protein is Beta-hexatoxin-Mr1a.